The following is a 634-amino-acid chain: tRNA uridine 5-carboxymethylaminomethyl modification enzyme MnmG (634 aa).

14–19 (GGGHAG) serves as a coordination point for FAD. 279–293 (GPRYCPSIEDKVVRF) is a binding site for NAD(+).

It belongs to the MnmG family. As to quaternary structure, homodimer. Heterotetramer of two MnmE and two MnmG subunits. It depends on FAD as a cofactor.

It localises to the cytoplasm. In terms of biological role, NAD-binding protein involved in the addition of a carboxymethylaminomethyl (cmnm) group at the wobble position (U34) of certain tRNAs, forming tRNA-cmnm(5)s(2)U34. The sequence is that of tRNA uridine 5-carboxymethylaminomethyl modification enzyme MnmG from Xanthomonas campestris pv. campestris (strain 8004).